A 640-amino-acid chain; its full sequence is Rab proteins geranylgeranyltransferase component A (640 aa).

2 disordered regions span residues 414 to 439 (DILG…NNNN) and 594 to 640 (HNEN…EMEL). Residues 419-439 (NNNNNNNNNNNNNNNNNNNNN) are compositionally biased toward low complexity. Acidic residues predominate over residues 604–624 (IDSDEDEDEDINDMNDNEEED).

This sequence belongs to the Rab GDI family.

Its function is as follows. Substrate-binding subunit (component A) of the Rab geranylgeranyltransferase (GGTase) complex. Binds unprenylated Rab proteins and presents the substrate peptide to the catalytic component B. The component A is thought to be regenerated by transferring its prenylated Rab back to the donor membrane. This Candida albicans (Yeast) protein is Rab proteins geranylgeranyltransferase component A (MRS6).